A 397-amino-acid polypeptide reads, in one-letter code: Phosphoglycerate kinase (397 aa).

Substrate-binding positions include aspartate 21–asparagine 23, arginine 37, histidine 60–arginine 63, arginine 119, and arginine 152. ATP is bound by residues lysine 203, glycine 294, glutamate 325, and glycine 354–serine 357.

Belongs to the phosphoglycerate kinase family. As to quaternary structure, monomer.

Its subcellular location is the cytoplasm. The enzyme catalyses (2R)-3-phosphoglycerate + ATP = (2R)-3-phospho-glyceroyl phosphate + ADP. It functions in the pathway carbohydrate degradation; glycolysis; pyruvate from D-glyceraldehyde 3-phosphate: step 2/5. This chain is Phosphoglycerate kinase, found in Chlorobaculum tepidum (strain ATCC 49652 / DSM 12025 / NBRC 103806 / TLS) (Chlorobium tepidum).